The following is a 156-amino-acid chain: ATP synthase subunit b (156 aa).

The helical transmembrane segment at 7 to 29 threads the bilayer; that stretch reads LIGQSITFIFFVWFSMKFVWPPI.

This sequence belongs to the ATPase B chain family. As to quaternary structure, F-type ATPases have 2 components, F(1) - the catalytic core - and F(0) - the membrane proton channel. F(1) has five subunits: alpha(3), beta(3), gamma(1), delta(1), epsilon(1). F(0) has three main subunits: a(1), b(2) and c(10-14). The alpha and beta chains form an alternating ring which encloses part of the gamma chain. F(1) is attached to F(0) by a central stalk formed by the gamma and epsilon chains, while a peripheral stalk is formed by the delta and b chains.

The protein resides in the cell inner membrane. In terms of biological role, f(1)F(0) ATP synthase produces ATP from ADP in the presence of a proton or sodium gradient. F-type ATPases consist of two structural domains, F(1) containing the extramembraneous catalytic core and F(0) containing the membrane proton channel, linked together by a central stalk and a peripheral stalk. During catalysis, ATP synthesis in the catalytic domain of F(1) is coupled via a rotary mechanism of the central stalk subunits to proton translocation. Its function is as follows. Component of the F(0) channel, it forms part of the peripheral stalk, linking F(1) to F(0). The chain is ATP synthase subunit b from Thiobacillus denitrificans (strain ATCC 25259 / T1).